A 345-amino-acid polypeptide reads, in one-letter code: Phosphate acyltransferase (345 aa).

The protein belongs to the PlsX family. Homodimer. Probably interacts with PlsY.

It is found in the cytoplasm. The catalysed reaction is a fatty acyl-[ACP] + phosphate = an acyl phosphate + holo-[ACP]. Its pathway is lipid metabolism; phospholipid metabolism. Its function is as follows. Catalyzes the reversible formation of acyl-phosphate (acyl-PO(4)) from acyl-[acyl-carrier-protein] (acyl-ACP). This enzyme utilizes acyl-ACP as fatty acyl donor, but not acyl-CoA. The polypeptide is Phosphate acyltransferase (Levilactobacillus brevis (strain ATCC 367 / BCRC 12310 / CIP 105137 / JCM 1170 / LMG 11437 / NCIMB 947 / NCTC 947) (Lactobacillus brevis)).